Here is a 973-residue protein sequence, read N- to C-terminus: Splicing regulator ARVCF (973 aa).

Positions 95–123 are disordered; it reads VTVEEDPGTPTSHVSIVTSEDGTTRRTET. Residues T103 and T105 each carry the phosphothreonine modification. The segment covering 103 to 115 has biased composition (polar residues); that stretch reads TPTSHVSIVTSED. R171 carries the post-translational modification Omega-N-methylarginine. 2 disordered regions span residues 233–254 and 267–331; these read RREAFPMGSESGPPSGRSLPEH and RSLA…QPER. S268 is subject to Phosphoserine. Positions 271–281 are enriched in acidic residues; that stretch reads ADDEGGPDLEP. Basic and acidic residues predominate over residues 289–303; it reads RRPEYGRGLRARALE. Phosphoserine occurs at positions 333, 336, 344, and 346. ARM repeat units follow at residues 349–388, 391–430, 434–468, 469–509, 527–566, and 576–623; these read STRKEPRWRDPELPEVLAMLRHPVDPVKANAAAYLQHLCF, EGIKRRVRQLRGLPLLVALLDHPRAEVRRRACGALRNLSY, ADNKAAIRDCGGVPALVRLLRAARDNEVRELVTGT, LWNL…NEDS, LRNVSSDGAEARRRLRECEGLVDALLHALQSAVGRKDTDN, and MRNL…GKKA. Positions 593 to 623 are disordered; the sequence is YQEVEPGIPGSAATSQRRRKDDASCFGGKKA. S607 is modified (phosphoserine). The Nuclear localization signal signature appears at 608–624; the sequence is QRRRKDDASCFGGKKAK. A Phosphothreonine modification is found at T637. ARM repeat units follow at residues 641 to 681, 694 to 733, 734 to 776, and 777 to 821; these read PKRT…AAGA, TYIRATVRKERGLPVLVELLQSETDKVVRAVAIALRNLSL, DQRN…AVLN, and TIHE…SHVL. The tract at residues 771 to 955 is required for interaction with RNA-binding proteins DDX5, HNRNPH2 and SRSF1 and with mRNAs; it reads VVAVLNTIHE…VLGPGAPPFC (185 aa). The segment at 844-926 is disordered; that stretch reads FQSASTAKGP…KELLKGPGPA (83 aa). A Phosphoserine modification is found at S865. T866 is subject to Phosphothreonine. Over residues 872-881 the composition is skewed to basic and acidic residues; it reads KNLDGEKSTT.

It belongs to the beta-catenin family. Component of a ribonucleoprotein complex containing mRNAs and RNA-binding proteins including DDX5, HNRNPH2 and SRSF1 as well as ARVCF. Interacts (via the extreme C-terminus) with FRMPD2 (via the PDZ 2 domain). Interacts with CCDC85B. In terms of tissue distribution, expressed in optic nerve sheath envelope (at protein level). Expressed in heart (at protein level).

Its subcellular location is the cell junction. It localises to the adherens junction. The protein resides in the nucleus. The protein localises to the cytoplasm. In terms of biological role, contributes to the regulation of alternative splicing of pre-mRNAs. The protein is Splicing regulator ARVCF of Rattus norvegicus (Rat).